Here is a 257-residue protein sequence, read N- to C-terminus: GTP cyclohydrolase FolE2 (257 aa).

The protein belongs to the GTP cyclohydrolase IV family.

The catalysed reaction is GTP + H2O = 7,8-dihydroneopterin 3'-triphosphate + formate + H(+). Its pathway is cofactor biosynthesis; 7,8-dihydroneopterin triphosphate biosynthesis; 7,8-dihydroneopterin triphosphate from GTP: step 1/1. Functionally, converts GTP to 7,8-dihydroneopterin triphosphate. This chain is GTP cyclohydrolase FolE2, found in Syntrophobacter fumaroxidans (strain DSM 10017 / MPOB).